Here is a 478-residue protein sequence, read N- to C-terminus: MAKDKKFVEDITPMDEDFAQWYTDIVKKAELADYSSIKGCMIIRPNGYAIWENIQKYVDTKLKEYGHENVSMPIFIPENLLQKEKDHVEGFAPEVAWVTHGGDDELAERLCVRPTSETLFCEHYAKIVQSYKDLPKLYNQWCSVVRWEKTTRPFLRTTEFLWQEGHTIHETKEEAESHSLKILNMYSRLCEDMLAMPVVMGKKTEKEKFAGADDTYTIESLMHDGKALQAGTSHYLGQNFSKAFAIQFSDRNGKLEYPHYTTWAVTTRLIGAIIMVHGDDSGLKLPPRIAPTQAVIIPVAQHKEGVLEKAKELKERLAKVVRVKLDDSDKMPGWKYSEYEMKGIPLRIEIGPKDIEKNQAVLVRRDNREKTIVSLDEIEVKVQEMLDIIHNSMLEEARKSRDEKTYVAITMEEFEDIIENKPGFIKAMWCGDRACEDKIREVTGATSRCMPFEQEVVSDTCVCCGKKAKNLVYWGRAY.

It belongs to the class-II aminoacyl-tRNA synthetase family. ProS type 3 subfamily. In terms of assembly, homodimer.

It localises to the cytoplasm. It carries out the reaction tRNA(Pro) + L-proline + ATP = L-prolyl-tRNA(Pro) + AMP + diphosphate. Functionally, catalyzes the attachment of proline to tRNA(Pro) in a two-step reaction: proline is first activated by ATP to form Pro-AMP and then transferred to the acceptor end of tRNA(Pro). This Clostridium botulinum (strain 657 / Type Ba4) protein is Proline--tRNA ligase.